The sequence spans 138 residues: Homeobox protein HD-11 (138 aa).

Residues 30-89 (CTGKQMRKTRLQTCVLNRIFEISRFPSSKTIVDLALLINVHPKSIQKWFQNTRQAIRKKG) constitute a DNA-binding region (homeobox).

It localises to the nucleus. The polypeptide is Homeobox protein HD-11 (HD-11) (Encephalitozoon cuniculi (strain GB-M1) (Microsporidian parasite)).